Consider the following 124-residue polypeptide: Small ribosomal subunit protein uS12 (124 aa).

The residue at position 89 (D89) is a 3-methylthioaspartic acid.

The protein belongs to the universal ribosomal protein uS12 family. In terms of assembly, part of the 30S ribosomal subunit. Contacts proteins S8 and S17. May interact with IF1 in the 30S initiation complex.

With S4 and S5 plays an important role in translational accuracy. In terms of biological role, interacts with and stabilizes bases of the 16S rRNA that are involved in tRNA selection in the A site and with the mRNA backbone. Located at the interface of the 30S and 50S subunits, it traverses the body of the 30S subunit contacting proteins on the other side and probably holding the rRNA structure together. The combined cluster of proteins S8, S12 and S17 appears to hold together the shoulder and platform of the 30S subunit. This is Small ribosomal subunit protein uS12 from Buchnera aphidicola subsp. Schizaphis graminum (strain Sg).